Consider the following 238-residue polypeptide: MRIHGLILLSFLLLAAQVLSEKVRKTAKNVPDSTTEEDMSPSLGKARNKQRSRTSKSMTHGRFVTKDQATCRWAVTEEELGINLKVQCTRADQEFSCVFAGDPTGCLKYDKDQTYWKQVARTLRKQKNICENSKSVLKTRVCRKKFPESNLKVVNPRKEKAEVSPREHNKVQEAVSMEPNKVKVDITTSPAATVAVKDSECLEDPDVLTQRKTALEFCGESWSSFCTFFLNMLQATSC.

The first 20 residues, 1–20 (MRIHGLILLSFLLLAAQVLS), serve as a signal peptide directing secretion. Residues 25–61 (KTAKNVPDSTTEEDMSPSLGKARNKQRSRTSKSMTHG) form a disordered region. 3 cysteine pairs are disulfide-bonded: Cys71/Cys88, Cys97/Cys130, and Cys106/Cys142. Residue Ser164 is glycosylated (O-linked (GalNAc...) serine). The sufficient for interaction with FGF2 and FGF2-induced effects stretch occupies residues 197-238 (KDSECLEDPDVLTQRKTALEFCGESWSSFCTFFLNMLQATSC). 2 disulfides stabilise this stretch: Cys201-Cys238 and Cys218-Cys226.

Belongs to the fibroblast growth factor-binding protein family. As to quaternary structure, found in a complex with FGFBP1, FGF1 and FGF2. Interacts with FGF1, FGF2, FGF7, FGF10, FGF22 and HSPG2. As to expression, expressed in gut, eye, thymus, skin, lung, tongue, Purkinje cells and cerebral chorioid plexus (at protein level).

It is found in the secreted. It localises to the extracellular space. The protein localises to the cell membrane. Its function is as follows. Acts as a carrier protein that release fibroblast-binding factors (FGFs) from the extracellular matrix (EM) storage and thus enhance the mitogenic activity of FGFs. Enhances FGF2 signaling during tissue repair, angiogenesis and in tumor growth. The polypeptide is Fibroblast growth factor-binding protein 1 (Fgfbp1) (Rattus norvegicus (Rat)).